Reading from the N-terminus, the 265-residue chain is Polyglutamine-binding protein 1 (265 aa).

The 35-residue stretch at 46 to 80 (EGLPPSWYKVFDPSCGLPYYWNADTDLVSWLSPHD) folds into the WW domain. Serine 94 is subject to Phosphoserine. The interval 94 to 265 (SSNADAEEKL…AEASRTKQQD (172 aa)) is disordered. A compositionally biased stretch (basic and acidic residues) spans 99–175 (AEEKLDRSHD…DKADREEGKE (77 aa)). 15 consecutive repeat copies span residues 104–110 (DRSHDKS), 111–117 (DRGHDKS), 118–124 (DRSHEKP), 125–131 (DRGHDKS), 132–138 (DRGHDKS), 139–140 (DR), 141–142 (DR), 143–144 (ER), 150–151 (DR), 152–153 (ER), 154–155 (ER), 156–157 (DR), 158–159 (ER), 160–161 (DR), and 162–163 (DR). Residues 104-138 (DRSHDKSDRGHDKSDRSHEKPDRGHDKSDRGHDKS) are 5 X 7 AA approximate tandem repeats of D-R-[SG]-H-D-K-S. The tract at residues 139–144 (DRDRER) is 3 X 2 AA tandem repeats of [DE]-R. The interval 150–163 (DRERERDRERDRDR) is 7 X 2 AA tandem repeats of [DE]-R. The important for interaction with TXNL4A stretch occupies residues 245–255 (YPSPGAVLRAN). Residue serine 247 is modified to Phosphoserine.

In terms of assembly, interacts with POU3F2/Brn-2, ATXN1, TXNL4A, HTT and AR. Interaction with ATXN1 correlates positively with the length of the polyglutamine tract. Interacts with RNA polymerase II large subunit in a phosphorylation-dependent manner. Forms a ternary complex with ATXN1 mutant and phosphorylated RNA polymerase II. Interacts (via C-terminus) with TXNL4A and CD2BP2. Interacts (via WW domain) with ATN1 and SF3B1, and may interact with additional splice factors. Interacts (via WW domain) with WBP11; Leading to reduce interaction between PQBP1 and TXNL4A. Interacts with CAPRIN1. Interacts with DDX1. Interacts with SFPQ. Interacts with KHSRP.

It is found in the nucleus. It localises to the nucleus speckle. The protein resides in the cytoplasmic granule. Intrinsically disordered protein that acts as a scaffold, and which is involved in different processes, such as pre-mRNA splicing, transcription regulation, innate immunity and neuron development. Interacts with splicing-related factors via the intrinsically disordered region and regulates alternative splicing of target pre-mRNA species. May suppress the ability of POU3F2 to transactivate the DRD1 gene in a POU3F2 dependent manner. Can activate transcription directly or via association with the transcription machinery. May be involved in ATXN1 mutant-induced cell death. The interaction with ATXN1 mutant reduces levels of phosphorylated RNA polymerase II large subunit. Involved in the assembly of cytoplasmic stress granule, possibly by participating in the transport of neuronal RNA granules. Also acts as an innate immune sensor of infection by retroviruses, by detecting the presence of reverse-transcribed DNA in the cytosol. Directly binds retroviral reverse-transcribed DNA in the cytosol and interacts with CGAS, leading to activate the cGAS-STING signaling pathway, triggering type-I interferon production. The protein is Polyglutamine-binding protein 1 (PQBP1) of Pongo pygmaeus (Bornean orangutan).